Here is a 471-residue protein sequence, read N- to C-terminus: Glutamate--tRNA ligase (471 aa).

The 'HIGH' region signature appears at 9–19; sequence PSPTGYLHVGG. Zn(2+) is bound by residues Cys-98, Cys-100, Cys-125, and His-127. The 'KMSKS' region signature appears at 237 to 241; it reads KLSKR. Lys-240 provides a ligand contact to ATP.

The protein belongs to the class-I aminoacyl-tRNA synthetase family. Glutamate--tRNA ligase type 1 subfamily. As to quaternary structure, monomer. Requires Zn(2+) as cofactor.

The protein localises to the cytoplasm. The catalysed reaction is tRNA(Glu) + L-glutamate + ATP = L-glutamyl-tRNA(Glu) + AMP + diphosphate. Its function is as follows. Catalyzes the attachment of glutamate to tRNA(Glu) in a two-step reaction: glutamate is first activated by ATP to form Glu-AMP and then transferred to the acceptor end of tRNA(Glu). This is Glutamate--tRNA ligase from Shigella dysenteriae serotype 1 (strain Sd197).